A 273-amino-acid chain; its full sequence is Dermonecrotic toxin (273 aa).

Positions 20 and 22 each coordinate Mg(2+). Catalysis depends on H35, which acts as the Nucleophile. A disulfide bridge connects residues C39 and C45. D79 is a binding site for Mg(2+).

Belongs to the arthropod phospholipase D family. Class I subfamily. Mg(2+) is required as a cofactor. As to expression, expressed by the venom gland.

Its subcellular location is the secreted. The enzyme catalyses an N-(acyl)-sphingosylphosphocholine = an N-(acyl)-sphingosyl-1,3-cyclic phosphate + choline. It carries out the reaction an N-(acyl)-sphingosylphosphoethanolamine = an N-(acyl)-sphingosyl-1,3-cyclic phosphate + ethanolamine. The catalysed reaction is a 1-acyl-sn-glycero-3-phosphocholine = a 1-acyl-sn-glycero-2,3-cyclic phosphate + choline. It catalyses the reaction a 1-acyl-sn-glycero-3-phosphoethanolamine = a 1-acyl-sn-glycero-2,3-cyclic phosphate + ethanolamine. Functionally, dermonecrotic toxins cleave the phosphodiester linkage between the phosphate and headgroup of certain phospholipids (sphingolipid and lysolipid substrates), forming an alcohol (often choline) and a cyclic phosphate. This toxin acts on sphingomyelin (SM). It may also act on ceramide phosphoethanolamine (CPE), lysophosphatidylcholine (LPC) and lysophosphatidylethanolamine (LPE), but not on lysophosphatidylserine (LPS), and lysophosphatidylglycerol (LPG). It acts by transphosphatidylation, releasing exclusively cyclic phosphate products as second products. Induces dermonecrosis, hemolysis, increased vascular permeability, edema, inflammatory response, and platelet aggregation. This Loxosceles laeta (South American recluse spider) protein is Dermonecrotic toxin.